Here is a 432-residue protein sequence, read N- to C-terminus: Adenosylmethionine-8-amino-7-oxononanoate aminotransferase (432 aa).

W52 contacts substrate. Residue 112 to 113 (GS) participates in pyridoxal 5'-phosphate binding. Y144 lines the substrate pocket. D245 is a binding site for pyridoxal 5'-phosphate. The substrate site is built by K274 and G307. An N6-(pyridoxal phosphate)lysine modification is found at K274. Pyridoxal 5'-phosphate is bound at residue 308–309 (PT). R391 is a substrate binding site.

It belongs to the class-III pyridoxal-phosphate-dependent aminotransferase family. BioA subfamily. Homodimer. Requires pyridoxal 5'-phosphate as cofactor.

Its subcellular location is the cytoplasm. It carries out the reaction (8S)-8-amino-7-oxononanoate + S-adenosyl-L-methionine = S-adenosyl-4-methylsulfanyl-2-oxobutanoate + (7R,8S)-7,8-diammoniononanoate. The protein operates within cofactor biosynthesis; biotin biosynthesis; 7,8-diaminononanoate from 8-amino-7-oxononanoate (SAM route): step 1/1. Its function is as follows. Catalyzes the transfer of the alpha-amino group from S-adenosyl-L-methionine (SAM) to 7-keto-8-aminopelargonic acid (KAPA) to form 7,8-diaminopelargonic acid (DAPA). It is the only aminotransferase known to utilize SAM as an amino donor. The sequence is that of Adenosylmethionine-8-amino-7-oxononanoate aminotransferase from Buchnera aphidicola subsp. Schizaphis graminum (strain Sg).